Here is a 312-residue protein sequence, read N- to C-terminus: Porphobilinogen deaminase (312 aa).

At cysteine 241 the chain carries S-(dipyrrolylmethanemethyl)cysteine.

The protein belongs to the HMBS family. Monomer. Requires dipyrromethane as cofactor.

It carries out the reaction 4 porphobilinogen + H2O = hydroxymethylbilane + 4 NH4(+). The protein operates within porphyrin-containing compound metabolism; protoporphyrin-IX biosynthesis; coproporphyrinogen-III from 5-aminolevulinate: step 2/4. It participates in porphyrin-containing compound metabolism; chlorophyll biosynthesis. Functionally, tetrapolymerization of the monopyrrole PBG into the hydroxymethylbilane pre-uroporphyrinogen in several discrete steps. In Prosthecochloris aestuarii (strain DSM 271 / SK 413), this protein is Porphobilinogen deaminase.